A 362-amino-acid polypeptide reads, in one-letter code: MSFNTFGHMFRVTTFGESHGVAIGCVVDGCPPMIPLTEADIQGDLDRRRPGQSRFTTQRQEPDQVKILSGVMAHPETGVQVTTGTPIGLLIENTDQRSKDYSEIKDKFRPGHADFTYEAKYGLRDYRGGGRSSARETATRVAAGAIARKVLPDVKVRGALVQMGPHKIDREKWDWDEVARNPFFCPDKDKAAFFETYLDGIRKSGSSIGAVLEIVAEGVPAGLGAPIYAKLDSDLAGAMMTINAVKGVEIGAGFGAAELTGEENADEMRTGNDGTRFLSNHAGGVLGGISTGQPVVVRFAVKPTSSILQPRLTVDRQGADTEIMTKGRHDPCVGIRAVPVGEAMMACVLADHFIRDRGQVGR.

Residues arginine 48 and arginine 54 each coordinate NADP(+). FMN contacts are provided by residues 131-133, 243-244, glycine 287, 302-306, and arginine 328; these read RSS, NA, and KPTSS.

Belongs to the chorismate synthase family. In terms of assembly, homotetramer. The cofactor is FMNH2.

The enzyme catalyses 5-O-(1-carboxyvinyl)-3-phosphoshikimate = chorismate + phosphate. Its pathway is metabolic intermediate biosynthesis; chorismate biosynthesis; chorismate from D-erythrose 4-phosphate and phosphoenolpyruvate: step 7/7. Catalyzes the anti-1,4-elimination of the C-3 phosphate and the C-6 proR hydrogen from 5-enolpyruvylshikimate-3-phosphate (EPSP) to yield chorismate, which is the branch point compound that serves as the starting substrate for the three terminal pathways of aromatic amino acid biosynthesis. This reaction introduces a second double bond into the aromatic ring system. The protein is Chorismate synthase of Bradyrhizobium diazoefficiens (strain JCM 10833 / BCRC 13528 / IAM 13628 / NBRC 14792 / USDA 110).